We begin with the raw amino-acid sequence, 346 residues long: Large ribosomal subunit protein uL1c (346 aa).

The N-terminal 70 residues, 1–70 (MAACATHSSL…RASNHKFIVS (70 aa)), are a transit peptide targeting the chloroplast. Residue Tyr129 is modified to Phosphotyrosine. At Thr177 the chain carries Phosphothreonine. The residue at position 197 (Ser197) is a Phosphoserine.

The protein belongs to the universal ribosomal protein uL1 family. As to quaternary structure, part of the 50S ribosomal subunit.

The protein resides in the plastid. Its subcellular location is the chloroplast. Functionally, this protein binds directly to 23S ribosomal RNA. The polypeptide is Large ribosomal subunit protein uL1c (RPL1) (Arabidopsis thaliana (Mouse-ear cress)).